We begin with the raw amino-acid sequence, 222 residues long: Germin-like protein subfamily 1 member 14 (222 aa).

The N-terminal stretch at 1–22 (MRFSKSLILITLSALVISFAEA) is a signal peptide. An intrachain disulfide couples Cys32 to Cys49. The 152-residue stretch at 63 to 214 (SGLNQAGTTN…AFQLDVNVVK (152 aa)) folds into the Cupin type-1 domain. Asn78 carries an N-linked (GlcNAc...) asparagine glycan. The Mn(2+) site is built by His111, His113, Glu118, and His160.

It belongs to the germin family. Oligomer (believed to be a pentamer but probably hexamer).

The protein localises to the secreted. Its subcellular location is the extracellular space. The protein resides in the apoplast. May play a role in plant defense. Probably has no oxalate oxidase activity even if the active site is conserved. The chain is Germin-like protein subfamily 1 member 14 from Arabidopsis thaliana (Mouse-ear cress).